Reading from the N-terminus, the 596-residue chain is Mitoguardin 2 (596 aa).

The next 2 helical transmembrane spans lie at 11–31 (IMQA…STFG) and 40–60 (LSPS…ALAL). Disordered regions lie at residues 67–158 (RRGR…AAWE) and 576–596 (ALPK…GQQD). The segment covering 110–123 (MSPSTRSNDTLSGV) has biased composition (polar residues). Positions 124–140 (SSIAQSKHSSSSHSIAS) are enriched in low complexity. Polar residues-rich tracts occupy residues 143 to 152 (VPSSPNQSVN) and 583 to 596 (QAES…GQQD).

It belongs to the mitoguardin family. In terms of assembly, homodimer and heterodimer; forms heterodimers with miga1.

The protein localises to the mitochondrion outer membrane. Its function is as follows. Regulator of mitochondrial fusion: acts by forming homo- and heterodimers at the mitochondrial outer membrane and facilitating the formation of pld6/MitoPLD dimers. May act by regulating phospholipid metabolism via pld6/MitoPLD. The chain is Mitoguardin 2 from Danio rerio (Zebrafish).